Reading from the N-terminus, the 127-residue chain is Holo-[acyl-carrier-protein] synthase (127 aa).

The Mg(2+) site is built by aspartate 9 and glutamate 58.

Belongs to the P-Pant transferase superfamily. AcpS family. Requires Mg(2+) as cofactor.

It is found in the cytoplasm. It carries out the reaction apo-[ACP] + CoA = holo-[ACP] + adenosine 3',5'-bisphosphate + H(+). In terms of biological role, transfers the 4'-phosphopantetheine moiety from coenzyme A to a Ser of acyl-carrier-protein. The sequence is that of Holo-[acyl-carrier-protein] synthase from Shewanella sp. (strain MR-4).